Reading from the N-terminus, the 389-residue chain is uncharacterized protein (389 aa).

The segment covering Met-1–Glu-12 has biased composition (polar residues). 2 disordered regions span residues Met-1–Leu-49 and His-86–Ala-111. Residues Glu-40–Leu-49 show a composition bias toward acidic residues. Over residues Arg-93–Arg-110 the composition is skewed to basic residues.

This is an uncharacterized protein from Caenorhabditis elegans.